The following is a 476-amino-acid chain: Arginine biosynthesis bifunctional protein ArgJ, mitochondrial (476 aa).

6 residues coordinate substrate: Thr193, Lys219, Thr237, Glu337, Asn471, and Ser476. Thr237 (nucleophile) is an active-site residue.

Belongs to the ArgJ family. In terms of assembly, heterodimer of an alpha and a beta chain. In terms of processing, the alpha and beta chains are autoproteolytically processed from a single precursor protein within the mitochondrion.

The protein resides in the mitochondrion matrix. The catalysed reaction is N(2)-acetyl-L-ornithine + L-glutamate = N-acetyl-L-glutamate + L-ornithine. It carries out the reaction L-glutamate + acetyl-CoA = N-acetyl-L-glutamate + CoA + H(+). The protein operates within amino-acid biosynthesis; L-arginine biosynthesis; L-ornithine and N-acetyl-L-glutamate from L-glutamate and N(2)-acetyl-L-ornithine (cyclic): step 1/1. Its pathway is amino-acid biosynthesis; L-arginine biosynthesis; N(2)-acetyl-L-ornithine from L-glutamate: step 1/4. Catalyzes two activities which are involved in the cyclic version of arginine biosynthesis: the synthesis of acetylglutamate from glutamate and acetyl-CoA, and of ornithine by transacetylation between acetylornithine and glutamate. This is Arginine biosynthesis bifunctional protein ArgJ, mitochondrial from Cryptococcus neoformans var. neoformans serotype D (strain JEC21 / ATCC MYA-565) (Filobasidiella neoformans).